The following is a 282-amino-acid chain: Phenylethanolamine N-methyltransferase (282 aa).

Phosphoserine is present on S7. Residues Y35, Y40, 79-80, Y85, D101, N106, 158-159, and A181 each bind S-adenosyl-L-methionine; these read GS and DV. E219 and D267 together coordinate octopamine.

It catalyses the reaction phenylethanolamine + S-adenosyl-L-methionine = N-methylphenylethanolamine + S-adenosyl-L-homocysteine + H(+). The enzyme catalyses (R)-noradrenaline + S-adenosyl-L-methionine = (R)-adrenaline + S-adenosyl-L-homocysteine + H(+). It carries out the reaction (R)-normetanephrine + S-adenosyl-L-methionine = (R)-metanephrine + S-adenosyl-L-homocysteine + H(+). The catalysed reaction is (R)-octopamine + S-adenosyl-L-methionine = (R)-synephrine + S-adenosyl-L-homocysteine + H(+). The protein operates within catecholamine biosynthesis; (R)-adrenaline biosynthesis; (R)-adrenaline from (R)-noradrenaline: step 1/1. With respect to regulation, inhibited by methyl methanethiosulfonate, phenylglyoxal, tetranitromethane and diethyl pyrocarbonate. Inhibited by 4-oxo-1,4-dihydro-quinoline-3,7-dicarboxylic acid, 4-(benzo[d][1,3]dioxol-5-ylamino)-4-oxobutanoic acid and 1,4-diaminonaphthalene-2,6-disulfonic acid. In terms of biological role, catalyzes the transmethylation of nonepinephrine (noradrenaline) to form epinephrine (adrenaline), using S-adenosyl-L-methionine as the methyl donor. Other substrates include phenylethanolamine and octopamine. Also methylates normetanephrine. In Homo sapiens (Human), this protein is Phenylethanolamine N-methyltransferase (PNMT).